The following is a 201-amino-acid chain: Holliday junction branch migration complex subunit RuvA (201 aa).

The interval 1 to 64 (MIGRLRGTLA…EDAHLLYGFA (64 aa)) is domain I. The domain II stretch occupies residues 65–143 (EKRERELFRE…AWENMPTIAP (79 aa)). The interval 144–152 (LVMEPRASA) is flexible linker. The segment at 153 to 201 (TVSSAEADAVSALIALGFKPQEASRAVAAVPGEDLSSEEMIRQALKGMV) is domain III.

Belongs to the RuvA family. Homotetramer. Forms an RuvA(8)-RuvB(12)-Holliday junction (HJ) complex. HJ DNA is sandwiched between 2 RuvA tetramers; dsDNA enters through RuvA and exits via RuvB. An RuvB hexamer assembles on each DNA strand where it exits the tetramer. Each RuvB hexamer is contacted by two RuvA subunits (via domain III) on 2 adjacent RuvB subunits; this complex drives branch migration. In the full resolvosome a probable DNA-RuvA(4)-RuvB(12)-RuvC(2) complex forms which resolves the HJ.

It is found in the cytoplasm. Its function is as follows. The RuvA-RuvB-RuvC complex processes Holliday junction (HJ) DNA during genetic recombination and DNA repair, while the RuvA-RuvB complex plays an important role in the rescue of blocked DNA replication forks via replication fork reversal (RFR). RuvA specifically binds to HJ cruciform DNA, conferring on it an open structure. The RuvB hexamer acts as an ATP-dependent pump, pulling dsDNA into and through the RuvAB complex. HJ branch migration allows RuvC to scan DNA until it finds its consensus sequence, where it cleaves and resolves the cruciform DNA. This is Holliday junction branch migration complex subunit RuvA from Pseudomonas aeruginosa (strain LESB58).